The sequence spans 23 residues: Alpha-conotoxin-like RgIB (23 aa).

2 disulfides stabilise this stretch: C5–C11 and C6–C19. Positions 7 to 9 are lacks the Ser-Xaa-Pro motif that is crucial for potent interaction with nAChR; sequence KNP.

In terms of tissue distribution, expressed by venom duct.

The protein resides in the secreted. In terms of biological role, alpha-conotoxins act on postsynaptic membranes, they bind to the nicotinic acetylcholine receptors (nAChR) and thus inhibit them. Is a specific blocker of the alpha-3-beta-4/CHRNA3-CHRNB4 image nAChR and may also block alpha-3-beta-4-alpha-5 (CHRNA3-CHRNB4-CHRNA5) channels. Has possibly a distinct nAChR binding mode from other alpha-conotoxins, due to a different three residue motif (lacks the Ser-Xaa-Pro motif). In vivo, causes hyperactivity and behavioral disorders in mice following intracranial injection. The polypeptide is Alpha-conotoxin-like RgIB (Conus regius (Crown cone)).